The primary structure comprises 236 residues: Snake venom serine protease ussurin (236 aa).

The region spanning 1-227 is the Peptidase S1 domain; the sequence is VIGGVECNIN…YTDWIQSIIS (227 aa). A disulfide bond links C28 and C44. Active-site charge relay system residues include H43 and D88. N-linked (GlcNAc...) asparagine glycosylation is found at N99 and N100. 3 disulfide bridges follow: C120/C188, C152/C167, and C178/C203. S182 acts as the Charge relay system in catalysis.

It belongs to the peptidase S1 family. Snake venom subfamily. In terms of assembly, monomer. As to expression, expressed by the venom gland.

It localises to the secreted. In terms of biological role, snake venom serine protease that may act in the hemostasis system of the prey. This chain is Snake venom serine protease ussurin, found in Gloydius ussuriensis (Ussuri mamushi).